Here is a 292-residue protein sequence, read N- to C-terminus: Acetyl-coenzyme A carboxylase carboxyl transferase subunit beta (292 aa).

The region spanning 29 to 292 (LWSKCPECGQ…HGCESRVASS (264 aa)) is the CoA carboxyltransferase N-terminal domain. Zn(2+) is bound by residues C33, C36, C52, and C55. The C4-type zinc finger occupies 33 to 55 (CPECGQVVYRKDLLSNASVCGNC).

This sequence belongs to the AccD/PCCB family. Acetyl-CoA carboxylase is a heterohexamer composed of biotin carboxyl carrier protein (AccB), biotin carboxylase (AccC) and two subunits each of ACCase subunit alpha (AccA) and ACCase subunit beta (AccD). Zn(2+) is required as a cofactor.

It localises to the cytoplasm. The enzyme catalyses N(6)-carboxybiotinyl-L-lysyl-[protein] + acetyl-CoA = N(6)-biotinyl-L-lysyl-[protein] + malonyl-CoA. Its pathway is lipid metabolism; malonyl-CoA biosynthesis; malonyl-CoA from acetyl-CoA: step 1/1. Component of the acetyl coenzyme A carboxylase (ACC) complex. Biotin carboxylase (BC) catalyzes the carboxylation of biotin on its carrier protein (BCCP) and then the CO(2) group is transferred by the transcarboxylase to acetyl-CoA to form malonyl-CoA. The chain is Acetyl-coenzyme A carboxylase carboxyl transferase subunit beta from Synechococcus sp. (strain CC9311).